The primary structure comprises 249 residues: MSDSAATDTKQSFQLKSASVSLTALELYYFDNDEFEANLRDKISQAPGFFKDIPLIISLEKYEGLDSELDFFRMIGTCRRHNIHVIGVRAANDDQRRLARGASLALLPGGSLKEKPAQEAPAQAEPEAAAAPEPANEPAPAKIINQPVRSGQQVYAPEGDLIILAPVQAGAEVLAAGNIHVYGPLRGRALAGIHGAESARVFCQSLEAELVSIAGHYKISEDLQDIGWKSAVQIQLRDDVLVVTPLDKA.

Residues 115-141 (KPAQEAPAQAEPEAAAAPEPANEPAPA) form a disordered region. A compositionally biased stretch (low complexity) spans 118-141 (QEAPAQAEPEAAAAPEPANEPAPA).

It belongs to the MinC family. Interacts with MinD and FtsZ.

Its function is as follows. Cell division inhibitor that blocks the formation of polar Z ring septums. Rapidly oscillates between the poles of the cell to destabilize FtsZ filaments that have formed before they mature into polar Z rings. Prevents FtsZ polymerization. This is Probable septum site-determining protein MinC from Marinobacter nauticus (strain ATCC 700491 / DSM 11845 / VT8) (Marinobacter aquaeolei).